Consider the following 1222-residue polypeptide: MLFNINEKGEPLVISFAPFLSPEAIKYLQENERCSDQSQKRTAQQIEAIYTSGQNILVSASAGSGKTFVMVERILDKILRGVSIDRLFISTFTVKAATELRERIENKLYSQIAQTTDFQMKVYLTEQLQSLCQADIGTMDAFAQKVVSRYGYSIGISSQFRIMQDKAEQDVLKQEVFSKLFSEFMNQKEAPVFRALVKNFSGNCKDTSAFRELVYTCYSFSQSTENPKIWLQENFLSAAKTYQRLEDIPDHDIELLLLAMQDTANQLRDVTDMEDYGQLTKAGSRSAKYTKHLTIIEKLSDWVRDFKCLYGKAGLDRLIRDVTGLIPSGNDVTVSKVKYPVFKTLHQKLKQFRHLETILMYQKDCFPLLEQLQDFVLAFSEAYLAVKIQESAFEFSDIAHFAIKILEENTDIRQSYQQHYHEVMVDEYQDNNHMQERLLTLLSNGHNRFMVGDIKQSIYRFRQADPQIFNQKFRDYQKKTEQGKVILLKENFRSQSEVLNVSNAVFSHLMDESVGDALYDEQHQLIAGSHAQTVPYLDRRAQLLLYNSDKDDGNAPSDSEGISFSEVTIVAKEIIKLHNDKGVPFEDITLLVSSRTRNDIISHTFNQYGIPIVTDGGQQNYLKSVEVMVMLDTLRTINNPRNDYALVALLRSPMFAFDEDDLARIALQKDNELDKDCLYDKIQRAVIGRGAHPELIHDTLLGKLNIFLKTLKSWRRYAKLGSLYDLIWKIFNDRFYFDFVASQAKAEQAQANLYALALRANQFEKSGYKGLYRFIKMIDKVLETQNDLADVEVAAPKQAVNLMTIHKSKGLQFPYVFILNCDKRFSMTDIHKSFILNRQHGIGIKYLADIKGLLGETTLNSVKVSMETLPYQLNKQELRLATLSEQMRLLYVAMTRAEKKVYFIGKASKSKSQDITDPKKLGKLLSLALREQLLTFQDWLLAIADIFSTEDLYFDVRFIEDSDLTQESVGRLQTPQLLNPDDLKDNRQSETIARALDMLEAVSQLNANYEAAIHLPTVRTPSQLKVTYEPLLEPIGVDIIEKSSRSLSDFTLPHFSKKAKVEASHIGSALHQLMQVLPLSKPINQQTLLDALRGIDSNEEVKTALDLKKIESFFCDTSLGQFFQTYQKHLYREAPFAILKLDPISQEEYVLRGIIDAYFLFDDHIVLVDYKTDKYKQPIELKKRYQQQLELYAEALTQTYKLPVTKRYLVLMGGGKPEIVEV.

The 457-residue stretch at 39-495 (QKRTAQQIEA…ILLKENFRSQ (457 aa)) folds into the UvrD-like helicase ATP-binding domain. 60–67 (ASAGSGKT) contacts ATP. One can recognise a UvrD-like helicase C-terminal domain in the interval 524 to 810 (QLIAGSHAQT…NLMTIHKSKG (287 aa)).

The protein belongs to the helicase family. AddA subfamily. As to quaternary structure, heterodimer of AddA and AddB/RexB. Mg(2+) serves as cofactor.

It catalyses the reaction Couples ATP hydrolysis with the unwinding of duplex DNA by translocating in the 3'-5' direction.. It carries out the reaction ATP + H2O = ADP + phosphate + H(+). In terms of biological role, the heterodimer acts as both an ATP-dependent DNA helicase and an ATP-dependent, dual-direction single-stranded exonuclease. Recognizes the chi site generating a DNA molecule suitable for the initiation of homologous recombination. The AddA nuclease domain is required for chi fragment generation; this subunit has the helicase and 3' -&gt; 5' nuclease activities. In Streptococcus pyogenes serotype M18 (strain MGAS8232), this protein is ATP-dependent helicase/nuclease subunit A.